The sequence spans 295 residues: MDNNLTSKLKYREAKLGYLMILPLLTVVLVFIILPVMGTFWISLHRDVTFIPEKPFVGLRNYLRVLSAREFWYSTFVTVSFSFVSVSLETILGLSFALILNERLKGRGVLRAIVLIPWAVPTIISARTWELMYNYSYGLFNWILSILGVSPVNWLGTPISAFFAIVIADVWKTTPFMTLLLLAGLQAIPQDLYEAALIDGASMFERFKSITLPLLKPVLIVALILRTIDALRVFDIIYVLTGGGPGGATTSISLLAFNYYNLGDYGIGSAISILTFVLVLSFTIVYLKVGRFRRD.

Helical transmembrane passes span 16–36 (LGYL…ILPV), 79–99 (VSFS…FALI), 112–132 (AIVL…WELM), 146–166 (ILGV…FAIV), 210–230 (ITLP…TIDA), 236–256 (IIYV…SLLA), and 267–287 (IGSA…IVYL). One can recognise an ABC transmembrane type-1 domain in the interval 75–286 (TFVTVSFSFV…VLVLSFTIVY (212 aa)).

This sequence belongs to the binding-protein-dependent transport system permease family. As to quaternary structure, the complex is composed of two ATP-binding proteins (MalK), two transmembrane proteins (MalG and MalF) and a solute-binding protein (MalE).

It is found in the cell membrane. Part of the ABC transporter complex MalEFGK involved in trehalose/maltose import. Responsible for the translocation of the substrate across the membrane. This is Trehalose/maltose transport system permease protein MalF (malF) from Thermococcus litoralis (strain ATCC 51850 / DSM 5473 / JCM 8560 / NS-C).